The following is a 275-amino-acid chain: ATP synthase subunit a (275 aa).

The next 7 membrane-spanning stretches (helical) occupy residues 46-66, 104-124, 135-155, 166-186, 204-224, 231-251, and 252-272; these read RLMLIRLLMSVLVAAFFVIAM, FLPVITTIFFIVVASNMASII, IGMPLVLAALAYIVFNYVGIK, SIVVPGVPLPLHFLLVPIEFI, MLAGHILLVLFFSATNYFFFV, IFGVPSIIAGIAFTFFELLVI, and FLQAYVFALLTAVYIELALHA.

The protein belongs to the ATPase A chain family. F-type ATPases have 2 components, CF(1) - the catalytic core - and CF(0) - the membrane proton channel. CF(1) has five subunits: alpha(3), beta(3), gamma(1), delta(1), epsilon(1). CF(0) has three main subunits: a(1), b(2) and c(9-12). The alpha and beta chains form an alternating ring which encloses part of the gamma chain. CF(1) is attached to CF(0) by a central stalk formed by the gamma and epsilon chains, while a peripheral stalk is formed by the delta and b chains.

The protein resides in the cell membrane. Its function is as follows. Key component of the proton channel; it plays a direct role in the translocation of protons across the membrane. The chain is ATP synthase subunit a from Rhodococcus erythropolis (strain PR4 / NBRC 100887).